Consider the following 350-residue polypeptide: uncharacterized protein (350 aa).

An Integrase catalytic domain is found at N164–V327.

This is an uncharacterized protein from Sinorhizobium fredii (strain NBRC 101917 / NGR234).